Consider the following 240-residue polypeptide: UDP-2,3-diacylglucosamine hydrolase (240 aa).

Mn(2+)-binding residues include aspartate 7, histidine 9, aspartate 40, asparagine 78, and histidine 113. 78–79 (NR) contributes to the substrate binding site. Positions 121, 159, 163, 166, and 194 each coordinate substrate. Mn(2+) contacts are provided by histidine 194 and histidine 196.

The protein belongs to the LpxH family. It depends on Mn(2+) as a cofactor.

Its subcellular location is the cell inner membrane. It carries out the reaction UDP-2-N,3-O-bis[(3R)-3-hydroxytetradecanoyl]-alpha-D-glucosamine + H2O = 2-N,3-O-bis[(3R)-3-hydroxytetradecanoyl]-alpha-D-glucosaminyl 1-phosphate + UMP + 2 H(+). It participates in glycolipid biosynthesis; lipid IV(A) biosynthesis; lipid IV(A) from (3R)-3-hydroxytetradecanoyl-[acyl-carrier-protein] and UDP-N-acetyl-alpha-D-glucosamine: step 4/6. Hydrolyzes the pyrophosphate bond of UDP-2,3-diacylglucosamine to yield 2,3-diacylglucosamine 1-phosphate (lipid X) and UMP by catalyzing the attack of water at the alpha-P atom. Involved in the biosynthesis of lipid A, a phosphorylated glycolipid that anchors the lipopolysaccharide to the outer membrane of the cell. This is UDP-2,3-diacylglucosamine hydrolase from Stutzerimonas stutzeri (strain A1501) (Pseudomonas stutzeri).